A 232-amino-acid chain; its full sequence is 2-C-methyl-D-erythritol 4-phosphate cytidylyltransferase (232 aa).

The protein belongs to the IspD/TarI cytidylyltransferase family. IspD subfamily.

The catalysed reaction is 2-C-methyl-D-erythritol 4-phosphate + CTP + H(+) = 4-CDP-2-C-methyl-D-erythritol + diphosphate. It participates in isoprenoid biosynthesis; isopentenyl diphosphate biosynthesis via DXP pathway; isopentenyl diphosphate from 1-deoxy-D-xylulose 5-phosphate: step 2/6. Functionally, catalyzes the formation of 4-diphosphocytidyl-2-C-methyl-D-erythritol from CTP and 2-C-methyl-D-erythritol 4-phosphate (MEP). This chain is 2-C-methyl-D-erythritol 4-phosphate cytidylyltransferase, found in Stenotrophomonas maltophilia (strain R551-3).